We begin with the raw amino-acid sequence, 101 residues long: Small ribosomal subunit protein uS14 (101 aa).

Residues M1 to N22 are disordered. Residues E11–N22 show a composition bias toward basic residues.

Belongs to the universal ribosomal protein uS14 family. As to quaternary structure, part of the 30S ribosomal subunit. Contacts proteins S3 and S10.

In terms of biological role, binds 16S rRNA, required for the assembly of 30S particles and may also be responsible for determining the conformation of the 16S rRNA at the A site. The protein is Small ribosomal subunit protein uS14 of Rickettsia conorii (strain ATCC VR-613 / Malish 7).